We begin with the raw amino-acid sequence, 775 residues long: MEPPYSLTAHYDEFQEVKYVSRCGAGGARGASLPPGFPLGAARSATGARSGLPRWNRREVCLLSGLVFAAGLCAILAAMLALKYLGPVAAGGGACPEGCPERKAFARAARFLAANLDASIDPCQDFYSFACGGWLRRHAIPDDKLTYGTIAAIGEQNEERLRRLLARPGGGPGGAAQRKVRAFFRSCLDMREIERLGPRPMLEVIEDCGGWDLGGAEERPGVAARWDLNRLLYKAQGVYSAAALFSLTVSLDDRNSSRYVIRIDQDGLTLPERTLYLAQDEDSEKILAAYRVFMERVLSLLGADAVEQKAQEILQVEQQLANITVSEHDDLRRDVSSMYNKVTLGQLQKITPHLRWKWLLDQIFQEDFSEEEEVVLLATDYMQQVSQLIRSTPHRVLHNYLVWRVVVVLSEHLSPPFREALHELAQEMEGSDKPQELARVCLGQANRHFGMALGALFVHEHFSAASKAKVQQLVEDIKYILGQRLEELDWMDAETRAAARAKLQYMMVMVGYPDFLLKPDAVDKEYEFEVHEKTYFKNILNSIRFSIQLSVKKIRQEVDKSTWLLPPQALNAYYLPNKNQMVFPAGILQPTLYDPDFPQSLNYGGIGTIIGHELTHGYDDWGGQYDRSGNLLHWWTEASYSRFLRKAECIVRLYDNFTVYNQRVNGKHTLGENIADMGGLKLAYHAYQKWVREHGPEHPLPRLKYTHDQLFFIAFAQNWCIKRRSQSIYLQVLTDKHAPEHYRVLGSVSQFEEFGRAFHCPKDSPMNPAHKCSVW.

The Cytoplasmic portion of the chain corresponds to 1 to 59; sequence MEPPYSLTAHYDEFQEVKYVSRCGAGGARGASLPPGFPLGAARSATGARSGLPRWNRRE. A helical; Signal-anchor for type II membrane protein membrane pass occupies residues 60-82; sequence VCLLSGLVFAAGLCAILAAMLAL. Topologically, residues 83 to 775 are lumenal; it reads KYLGPVAAGG…MNPAHKCSVW (693 aa). Residues 98 to 775 form the Peptidase M13 domain; it reads GCPERKAFAR…MNPAHKCSVW (678 aa). 4 disulfide bridges follow: Cys-123–Cys-760, Cys-131–Cys-720, Cys-187–Cys-441, and Cys-649–Cys-772. 2 N-linked (GlcNAc...) asparagine glycosylation sites follow: Asn-255 and Asn-322. His-612 lines the Zn(2+) pocket. Glu-613 is a catalytic residue. A Zn(2+)-binding site is contributed by His-616. Asn-656 is a glycosylation site (N-linked (GlcNAc...) asparagine). Glu-672 provides a ligand contact to Zn(2+). Asp-676 acts as the Proton donor in catalysis.

It belongs to the peptidase M13 family. Zn(2+) is required as a cofactor. Post-translationally, N-glycosylated. In terms of tissue distribution, highly expressed in the CNS, in particular in putamen, spinal cord, medulla and subthalamic nucleus. A strong signal was also detected in uterine subepithelial cells and around renal blood vessels. Detected at lower levels in amygdala, caudate, thalamus, pancreas and skeletal muscle. Detected at very low levels in substantia nigra, cerebellum, cortex, corpus callosum and hippocampus.

The protein resides in the membrane. Functionally, may contribute to the degradation of peptide hormones and be involved in the inactivation of neuronal peptides. This is Endothelin-converting enzyme-like 1 (ECEL1) from Homo sapiens (Human).